Reading from the N-terminus, the 29-residue chain is Varv peptide F (29 aa).

Positions 1 to 29 form a cross-link, cyclopeptide (Gly-Asn); the sequence is GVPICGETCTLGTCYTAGCSCSWPVCTRN. Disulfide bonds link C5–C19, C9–C21, and C14–C26.

In terms of processing, this is a cyclic peptide.

In terms of biological role, probably participates in a plant defense mechanism. Has cytotoxic activity against a variety of drug-resistant and drug-sensitive human tumor cell lines. The polypeptide is Varv peptide F (Viola arvensis (European field pansy)).